We begin with the raw amino-acid sequence, 161 residues long: Phosphopantetheine adenylyltransferase (161 aa).

Position 9 (Thr9) interacts with substrate. Residues 9–10 and His17 contribute to the ATP site; that span reads TF. Positions 41, 73, and 87 each coordinate substrate. ATP is bound by residues 88 to 90, Glu98, and 123 to 129; these read GLR and YQFISGT.

This sequence belongs to the bacterial CoaD family. Homohexamer. Mg(2+) is required as a cofactor.

The protein resides in the cytoplasm. The enzyme catalyses (R)-4'-phosphopantetheine + ATP + H(+) = 3'-dephospho-CoA + diphosphate. The protein operates within cofactor biosynthesis; coenzyme A biosynthesis; CoA from (R)-pantothenate: step 4/5. In terms of biological role, reversibly transfers an adenylyl group from ATP to 4'-phosphopantetheine, yielding dephospho-CoA (dPCoA) and pyrophosphate. The sequence is that of Phosphopantetheine adenylyltransferase from Cupriavidus necator (strain ATCC 17699 / DSM 428 / KCTC 22496 / NCIMB 10442 / H16 / Stanier 337) (Ralstonia eutropha).